Reading from the N-terminus, the 193-residue chain is dCTP deaminase (193 aa).

Residues 110–115 (RSSLAR), aspartate 128, 136–138 (VLE), tyrosine 171, lysine 178, and glutamine 182 each bind dCTP. The active-site Proton donor/acceptor is the glutamate 138. A disordered region spans residues 168-193 (DRPYNRRQDAKYKNQQGAVSSRIDED). The segment covering 170-179 (PYNRRQDAKY) has biased composition (basic and acidic residues).

This sequence belongs to the dCTP deaminase family. In terms of assembly, homotrimer.

The enzyme catalyses dCTP + H2O + H(+) = dUTP + NH4(+). The protein operates within pyrimidine metabolism; dUMP biosynthesis; dUMP from dCTP (dUTP route): step 1/2. In terms of biological role, catalyzes the deamination of dCTP to dUTP. The sequence is that of dCTP deaminase from Photorhabdus laumondii subsp. laumondii (strain DSM 15139 / CIP 105565 / TT01) (Photorhabdus luminescens subsp. laumondii).